We begin with the raw amino-acid sequence, 154 residues long: Endoribonuclease YbeY (154 aa).

Positions 117, 121, and 127 each coordinate Zn(2+).

The protein belongs to the endoribonuclease YbeY family. Requires Zn(2+) as cofactor.

It localises to the cytoplasm. Its function is as follows. Single strand-specific metallo-endoribonuclease involved in late-stage 70S ribosome quality control and in maturation of the 3' terminus of the 16S rRNA. The protein is Endoribonuclease YbeY of Mycoplasma pneumoniae (strain ATCC 29342 / M129 / Subtype 1) (Mycoplasmoides pneumoniae).